Here is a 372-residue protein sequence, read N- to C-terminus: Transaldolase (372 aa).

The active-site Schiff-base intermediate with substrate is the lysine 140.

The protein belongs to the transaldolase family. Type 2 subfamily.

It is found in the cytoplasm. It carries out the reaction D-sedoheptulose 7-phosphate + D-glyceraldehyde 3-phosphate = D-erythrose 4-phosphate + beta-D-fructose 6-phosphate. The protein operates within carbohydrate degradation; pentose phosphate pathway; D-glyceraldehyde 3-phosphate and beta-D-fructose 6-phosphate from D-ribose 5-phosphate and D-xylulose 5-phosphate (non-oxidative stage): step 2/3. In terms of biological role, transaldolase is important for the balance of metabolites in the pentose-phosphate pathway. The chain is Transaldolase from Acidothermus cellulolyticus (strain ATCC 43068 / DSM 8971 / 11B).